The primary structure comprises 757 residues: Cellulose synthase-like protein B2 (757 aa).

Helical transmembrane passes span 24 to 44 (AVDL…ILYM) and 48 to 68 (GIIW…WLLS). Residues Asp136 and Asp461 contribute to the active site. Helical transmembrane passes span 533 to 555 (AYLC…LPAY), 568 to 588 (LCLG…LWEF), 607 to 627 (IVAT…LLGL), 672 to 692 (FLPG…VFVG), 704 to 724 (GSGL…FPFL), and 735 to 755 (IPLS…VFSV).

Belongs to the glycosyltransferase 2 family. Plant cellulose synthase-like B subfamily. In terms of tissue distribution, expressed in young seedlings, primarily in the root vascular tissue.

It localises to the golgi apparatus membrane. Thought to be a Golgi-localized beta-glycan synthase that polymerize the backbones of noncellulosic polysaccharides (hemicelluloses) of plant cell wall. In Arabidopsis thaliana (Mouse-ear cress), this protein is Cellulose synthase-like protein B2 (CSLB2).